We begin with the raw amino-acid sequence, 89 residues long: Large ribosomal subunit protein eL43 (89 aa).

Residues Cys38, Cys41, Cys56, and Cys59 each coordinate Zn(2+). The C4-type zinc finger occupies 38-59 (CPVCHKRAVKRVGTGIWRCTKC).

Belongs to the eukaryotic ribosomal protein eL43 family. Putative zinc-binding subfamily. Part of the 50S ribosomal subunit. Zn(2+) is required as a cofactor.

In terms of biological role, binds to the 23S rRNA. The sequence is that of Large ribosomal subunit protein eL43 from Methanopyrus kandleri (strain AV19 / DSM 6324 / JCM 9639 / NBRC 100938).